Consider the following 458-residue polypeptide: Exodeoxyribonuclease 7 large subunit (458 aa).

This sequence belongs to the XseA family. Heterooligomer composed of large and small subunits.

The protein localises to the cytoplasm. The enzyme catalyses Exonucleolytic cleavage in either 5'- to 3'- or 3'- to 5'-direction to yield nucleoside 5'-phosphates.. Bidirectionally degrades single-stranded DNA into large acid-insoluble oligonucleotides, which are then degraded further into small acid-soluble oligonucleotides. In Escherichia coli O81 (strain ED1a), this protein is Exodeoxyribonuclease 7 large subunit.